The chain runs to 426 residues: MTEFDLHAYMTRVGQQARAASRAMARASTADKNRALLTIAAAIRRDADKLKAVNARDVERARTNGQDAAFIDRLTLSDKAIATMAAGLEQIAALADPIGEISNMKFRPTGIQVGQMRVPLGVIGIIYESRPNVTIDAAALCLKSGNSTILRGGSEAIESNTALAALVAEGLAAAGLPSEAVQVIETTDRAAVGRLITMTEYVDVIVPRGGKSLIARLMEEARVPMIKHLDGICHVYIDDDADLEKAVRVCDNAKTQRYAPCNTMETLLVSREIAAKALPPLCRIYQEKGVELRVCPATRATLEAAGFSGLVDATEEDWRLEYLAPVLAIRTVDGLDAAIAHINTYGSAHTDSIITENYTTGMRFLREVDSASVMINASTRFADGFEYGLGAEIGISNDKLHARGPVGLEGLTSLKYVVFGHGEIRT.

The protein belongs to the gamma-glutamyl phosphate reductase family.

The protein resides in the cytoplasm. The enzyme catalyses L-glutamate 5-semialdehyde + phosphate + NADP(+) = L-glutamyl 5-phosphate + NADPH + H(+). It functions in the pathway amino-acid biosynthesis; L-proline biosynthesis; L-glutamate 5-semialdehyde from L-glutamate: step 2/2. In terms of biological role, catalyzes the NADPH-dependent reduction of L-glutamate 5-phosphate into L-glutamate 5-semialdehyde and phosphate. The product spontaneously undergoes cyclization to form 1-pyrroline-5-carboxylate. The chain is Gamma-glutamyl phosphate reductase from Cupriavidus metallidurans (strain ATCC 43123 / DSM 2839 / NBRC 102507 / CH34) (Ralstonia metallidurans).